A 312-amino-acid polypeptide reads, in one-letter code: Olfactory receptor 7D2 (312 aa).

Residues 1 to 25 are Extracellular-facing; that stretch reads MEAGNQTGFLEFILLGLSEDPELQP. N-linked (GlcNAc...) asparagine glycosylation is present at Asn5. The chain crosses the membrane as a helical span at residues 26-46; sequence FIFGLFLSMYLVTVLGNLLII. Topologically, residues 47 to 54 are cytoplasmic; that stretch reads LAISSDSH. A helical membrane pass occupies residues 55 to 75; sequence LHTPMYFFLSNLSWVDICFST. Topologically, residues 76–99 are extracellular; sequence CIVPKMLVNIQTENKAISYMDCLT. Cys97 and Cys189 form a disulfide bridge. The chain crosses the membrane as a helical span at residues 100 to 120; it reads QVYFSMFFPILDTLLLTVMAY. The Cytoplasmic segment spans residues 121–139; sequence DRFVAVCHPLHYMIIMNPH. Residues 140–160 traverse the membrane as a helical segment; it reads LCGLLVFVTWLIGVMTSLLHI. Residues 161–197 lie on the Extracellular side of the membrane; that stretch reads SLMMHLIFCKDFEIPHFFCELTYILQLACSDTFLNST. The helical transmembrane segment at 198–217 threads the bilayer; sequence LIYFMTGVLGVFPLLGIIFS. The Cytoplasmic segment spans residues 218–237; the sequence is YSRIASSIRKMSSSGGKQKA. Residues 238 to 258 form a helical membrane-spanning segment; sequence LSTCGSHLSVVSLFYGTGIGV. The Extracellular portion of the chain corresponds to 259-271; it reads HFTSAVTHSSQKI. Residues 272–292 form a helical membrane-spanning segment; the sequence is SVASVMYTVVTPMLNPFIYSL. Over 293 to 312 the chain is Cytoplasmic; that stretch reads RNKDVKGALGSLLSRAASCL.

This sequence belongs to the G-protein coupled receptor 1 family.

It localises to the cell membrane. Its function is as follows. Odorant receptor. This is Olfactory receptor 7D2 (OR7D2) from Homo sapiens (Human).